The chain runs to 185 residues: GTP-binding protein rhb1 (185 aa).

Residues S16, G18, K19, S20, S21, V32, Y35, T38, N119, D122, and A150 each coordinate GTP. Residue S20 coordinates Mg(2+). Positions Y35–F43 match the Effector region motif. A Mg(2+)-binding site is contributed by T38. Residue C182 is modified to Cysteine methyl ester. C182 carries the S-farnesyl cysteine lipid modification. A propeptide spans V183 to A185 (removed in mature form).

It belongs to the small GTPase superfamily. Rheb family.

The protein resides in the cell membrane. It catalyses the reaction GTP + H2O = GDP + phosphate + H(+). Binds GTP and exhibits intrinsic GTPase activity. Regulates entry into stationary phase when extracellular nitrogen levels are adequate for growth. The chain is GTP-binding protein rhb1 (rhb1) from Schizosaccharomyces pombe (strain 972 / ATCC 24843) (Fission yeast).